The chain runs to 476 residues: Aspartyl/glutamyl-tRNA(Asn/Gln) amidotransferase subunit B (476 aa).

The protein belongs to the GatB/GatE family. GatB subfamily. As to quaternary structure, heterotrimer of A, B and C subunits.

It catalyses the reaction L-glutamyl-tRNA(Gln) + L-glutamine + ATP + H2O = L-glutaminyl-tRNA(Gln) + L-glutamate + ADP + phosphate + H(+). The enzyme catalyses L-aspartyl-tRNA(Asn) + L-glutamine + ATP + H2O = L-asparaginyl-tRNA(Asn) + L-glutamate + ADP + phosphate + 2 H(+). Functionally, allows the formation of correctly charged Asn-tRNA(Asn) or Gln-tRNA(Gln) through the transamidation of misacylated Asp-tRNA(Asn) or Glu-tRNA(Gln) in organisms which lack either or both of asparaginyl-tRNA or glutaminyl-tRNA synthetases. The reaction takes place in the presence of glutamine and ATP through an activated phospho-Asp-tRNA(Asn) or phospho-Glu-tRNA(Gln). In Listeria innocua serovar 6a (strain ATCC BAA-680 / CLIP 11262), this protein is Aspartyl/glutamyl-tRNA(Asn/Gln) amidotransferase subunit B.